The following is a 70-amino-acid chain: MAAIRNLLILTMLLIVCVSWNADAAPGAAPSIALDKRANENFSLREQEQPICEHCWKQPPPRRCPKFCLE.

The N-terminal stretch at 1–24 is a signal peptide; the sequence is MAAIRNLLILTMLLIVCVSWNADA.

This sequence belongs to the scoloptoxin-04 family. Post-translationally, contains 2 disulfide bonds. Expressed by the venom gland.

The protein localises to the secreted. This is U-scoloptoxin(04)-Er3a from Ethmostigmus rubripes (Giant centipede).